The primary structure comprises 298 residues: Protoheme IX farnesyltransferase (298 aa).

8 helical membrane-spanning segments follow: residues 23-43 (VTQL…PGLP), 49-69 (LFGT…NCLI), 95-115 (VLSL…HLVN), 117-137 (LTMW…TVIL), 144-164 (NIVI…ASVA), 171-191 (AWVL…ALAL), 234-254 (FMHM…GIFV), and 276-296 (SILY…VGVL).

This sequence belongs to the UbiA prenyltransferase family. Protoheme IX farnesyltransferase subfamily.

It localises to the cell inner membrane. The enzyme catalyses heme b + (2E,6E)-farnesyl diphosphate + H2O = Fe(II)-heme o + diphosphate. It functions in the pathway porphyrin-containing compound metabolism; heme O biosynthesis; heme O from protoheme: step 1/1. Functionally, converts heme B (protoheme IX) to heme O by substitution of the vinyl group on carbon 2 of heme B porphyrin ring with a hydroxyethyl farnesyl side group. The chain is Protoheme IX farnesyltransferase from Bordetella avium (strain 197N).